Reading from the N-terminus, the 380-residue chain is Cytochrome b (380 aa).

4 consecutive transmembrane segments (helical) span residues 34–54, 78–99, 114–134, and 179–199; these read FGSL…FLAM, WLLR…YFHI, WNIG…GYVL, and FFTF…IHLL. H84 and H98 together coordinate heme b. Heme b is bound by residues H183 and H197. Residue H202 participates in a ubiquinone binding. Helical transmembrane passes span 227–247, 289–309, 321–341, and 348–368; these read YKDL…STFA, LGGV…PIIH, IAKT…WIGG, and FITI…LLIP.

The protein belongs to the cytochrome b family. The cytochrome bc1 complex contains 3 respiratory subunits (MT-CYB, CYC1 and UQCRFS1), 2 core proteins (UQCRC1 and UQCRC2) and probably 6 low-molecular weight proteins. Heme b serves as cofactor.

It is found in the mitochondrion inner membrane. Functionally, component of the ubiquinol-cytochrome c reductase complex (complex III or cytochrome b-c1 complex) that is part of the mitochondrial respiratory chain. The b-c1 complex mediates electron transfer from ubiquinol to cytochrome c. Contributes to the generation of a proton gradient across the mitochondrial membrane that is then used for ATP synthesis. This is Cytochrome b (mt-cyb) from Rana amurensis (Siberian wood frog).